A 275-amino-acid polypeptide reads, in one-letter code: Elongation factor Ts (275 aa).

Residues 76-79 are involved in Mg(2+) ion dislocation from EF-Tu; that stretch reads TDFV.

It belongs to the EF-Ts family.

It is found in the cytoplasm. In terms of biological role, associates with the EF-Tu.GDP complex and induces the exchange of GDP to GTP. It remains bound to the aminoacyl-tRNA.EF-Tu.GTP complex up to the GTP hydrolysis stage on the ribosome. The chain is Elongation factor Ts from Mycolicibacterium paratuberculosis (strain ATCC BAA-968 / K-10) (Mycobacterium paratuberculosis).